Here is a 307-residue protein sequence, read N- to C-terminus: Agmatinase (307 aa).

6 residues coordinate Mn(2+): H128, D151, H153, D155, D232, and D234.

Belongs to the arginase family. Agmatinase subfamily. Mn(2+) serves as cofactor.

It carries out the reaction agmatine + H2O = urea + putrescine. It participates in amine and polyamine biosynthesis; putrescine biosynthesis via agmatine pathway; putrescine from agmatine: step 1/1. Functionally, catalyzes the formation of putrescine from agmatine. The polypeptide is Agmatinase (Photorhabdus laumondii subsp. laumondii (strain DSM 15139 / CIP 105565 / TT01) (Photorhabdus luminescens subsp. laumondii)).